The chain runs to 39 residues: Potassium channel toxin alpha-KTx 2.24 (39 aa).

3 disulfide bridges follow: Cys7–Cys29, Cys13–Cys34, and Cys17–Cys36.

It belongs to the short scorpion toxin superfamily. Potassium channel inhibitor family. Alpha-KTx 02 subfamily. As to expression, expressed by the venom gland.

The protein resides in the secreted. Blocks human voltage-gated potassium (Kv) channels Kv1.1/KCNA, Kv1.2/KCNA2 and Kv1.3/KCNA3. Exhibits high affinity for Kv1.2/KCNA2 and selectivity over Kv1.1/KCNA and Kv1.3/KCNA3. This chain is Potassium channel toxin alpha-KTx 2.24, found in Centruroides bonito (Scorpion).